The primary structure comprises 778 residues: uncharacterized protein (778 aa).

Composition is skewed to polar residues over residues 1 to 11 (MPISSPGTRCS), 18 to 34 (TLQQ…QSLG), and 41 to 51 (GSITENYVQDS). The disordered stretch occupies residues 1–60 (MPISSPGTRCSSDLKDPTLQQYSAESVSTEQSLGTFEESKGSITENYVQDSSVDEHDDGN). A run of 2 helical transmembrane segments spans residues 356 to 381 (YILM…APII) and 401 to 423 (GFLA…GAHI).

It belongs to the TMCO4 family.

The protein localises to the golgi apparatus membrane. This is an uncharacterized protein from Schizosaccharomyces pombe (strain 972 / ATCC 24843) (Fission yeast).